We begin with the raw amino-acid sequence, 1222 residues long: ATP-dependent helicase/nuclease subunit A (1222 aa).

The UvrD-like helicase ATP-binding domain occupies 39 to 495 (QKRTAQQIEA…ILLKENFRSQ (457 aa)). Residue 60–67 (ASAGSGKT) coordinates ATP. One can recognise a UvrD-like helicase C-terminal domain in the interval 524–810 (QLIAGSHAQT…NLMTIHKSKG (287 aa)).

The protein belongs to the helicase family. AddA subfamily. Heterodimer of AddA and AddB/RexB. It depends on Mg(2+) as a cofactor.

It catalyses the reaction Couples ATP hydrolysis with the unwinding of duplex DNA by translocating in the 3'-5' direction.. It carries out the reaction ATP + H2O = ADP + phosphate + H(+). The heterodimer acts as both an ATP-dependent DNA helicase and an ATP-dependent, dual-direction single-stranded exonuclease. Recognizes the chi site generating a DNA molecule suitable for the initiation of homologous recombination. The AddA nuclease domain is required for chi fragment generation; this subunit has the helicase and 3' -&gt; 5' nuclease activities. This chain is ATP-dependent helicase/nuclease subunit A, found in Streptococcus pyogenes serotype M2 (strain MGAS10270).